Consider the following 223-residue polypeptide: Phosphoribosylformylglycinamidine synthase subunit PurQ (223 aa).

In terms of domain architecture, Glutamine amidotransferase type-1 spans Ser-3–Ala-223. The Nucleophile role is filled by Cys-86. Residues His-196 and Glu-198 contribute to the active site.

As to quaternary structure, part of the FGAM synthase complex composed of 1 PurL, 1 PurQ and 2 PurS subunits.

The protein resides in the cytoplasm. It carries out the reaction N(2)-formyl-N(1)-(5-phospho-beta-D-ribosyl)glycinamide + L-glutamine + ATP + H2O = 2-formamido-N(1)-(5-O-phospho-beta-D-ribosyl)acetamidine + L-glutamate + ADP + phosphate + H(+). It catalyses the reaction L-glutamine + H2O = L-glutamate + NH4(+). It functions in the pathway purine metabolism; IMP biosynthesis via de novo pathway; 5-amino-1-(5-phospho-D-ribosyl)imidazole from N(2)-formyl-N(1)-(5-phospho-D-ribosyl)glycinamide: step 1/2. In terms of biological role, part of the phosphoribosylformylglycinamidine synthase complex involved in the purines biosynthetic pathway. Catalyzes the ATP-dependent conversion of formylglycinamide ribonucleotide (FGAR) and glutamine to yield formylglycinamidine ribonucleotide (FGAM) and glutamate. The FGAM synthase complex is composed of three subunits. PurQ produces an ammonia molecule by converting glutamine to glutamate. PurL transfers the ammonia molecule to FGAR to form FGAM in an ATP-dependent manner. PurS interacts with PurQ and PurL and is thought to assist in the transfer of the ammonia molecule from PurQ to PurL. This chain is Phosphoribosylformylglycinamidine synthase subunit PurQ, found in Rhizobium etli (strain ATCC 51251 / DSM 11541 / JCM 21823 / NBRC 15573 / CFN 42).